The primary structure comprises 449 residues: Interferon-related developmental regulator 1 (449 aa).

Over residues 1–10 (MPKNKKRNAP) the composition is skewed to basic residues. A disordered region spans residues 1-41 (MPKNKKRNAPHRGGGGGGGSGAATSAATTGGPHRTVQPFSD). The span at 12–21 (RGGGGGGGSG) shows a compositional bias: gly residues. Low complexity predominate over residues 22 to 31 (AATSAATTGG).

The protein belongs to the IFRD family. In terms of assembly, interacts with PSIP1/LEDGF. As to expression, expressed at high levels in the embryonic brain in the period related to neuroblast proliferation and differentiation.

The protein localises to the cytoplasm. Its subcellular location is the cell membrane. It is found in the nucleus. Functionally, probably participates in neurogenesis. Could play a role in regulating gene activity in the proliferative and/or differentiative pathways induced by NGF. The chain is Interferon-related developmental regulator 1 (Ifrd1) from Rattus norvegicus (Rat).